The chain runs to 219 residues: Transmembrane emp24 domain-containing protein 10 (219 aa).

The N-terminal stretch at 1-31 is a signal peptide; sequence MSGLFGPLSRPGPLPSAWLFLLLLGPSSVLG. Residues 1–142 are required for interaction with STX17; the sequence is MSGLFGPLSR…KNYEEIAKVE (142 aa). Residues 32-185 are Lumenal-facing; it reads ISFHLPVNSR…RDTNESTNTR (154 aa). In terms of domain architecture, GOLD spans 41-193; that stretch reads RKCLREEIHK…TRVLYFSIFS (153 aa). The interval 147–178 is required for TMED10 and TMED2 cis-Golgi network localization; it reads LEVELRRLEDLSESIVNDFAYMKKREEEMRDT. 2 positions are modified to dimethylated arginine: arginine 171 and arginine 176. An N-linked (GlcNAc...) asparagine glycan is attached at asparagine 179. The helical transmembrane segment at 186–206 threads the bilayer; it reads VLYFSIFSMFCLIGLATWQVF. Positions 204 to 219 are interaction with COPG1; the sequence is QVFYLRRFFKAKKLIE. Over 207 to 219 the chain is Cytoplasmic; that stretch reads YLRRFFKAKKLIE. The interaction with ARF1 and IL1B stretch occupies residues 207 to 219; the sequence is YLRRFFKAKKLIE. Positions 211 to 212 match the COPII vesicle coat-binding motif; sequence FF. The short motif at 211-219 is the COPI vesicle coat-binding element; the sequence is FFKAKKLIE.

This sequence belongs to the EMP24/GP25L family. In terms of assembly, predominantly dimeric and to a lesser extent monomeric in the ER. Monomer and dimer in ERGIC and cis-Golgi network. Forms homooligomer (via GOLD domain); the assembly is promoted by direct binding with leaderless cargos and may form a protein channel that facilitates cargo entry into the ERGIC. Forms heterooligomeric complexes with other members of the p24 family such as TMED2, TMED7 and TMED9. Interacts (via GOLD domain) with TMED2 (via GOLD domain); the complex is required for export of TMED10 from the ER to the cis-Golgi network; the complex is proposed to be involved in cis-Golgi network dynamics and / or biogenesis. Associates with the COPI vesicle coat subunits (coatomer). Tetramerization of the cytoplasmic domain at the Golgi membrane in vitro; the complex is proposed to interact with COPI coatomer and induce budding of the vesicles. Interacts with COPG1; the interaction involves TMED10 homodimer. Interacts with ARF1 (GDP-bound); the interaction probably involves a TMED10 oligomer. Interacts with SEC23A, SEC24B, SEC24C and SEC24D components of the coat protein complex II/COPII, indicative of an association of TMED10 with the COPII vesicle coat. Interacts with CD59. Interacts with MPPE1/PGAP5; the complex might recruit and sort GPI-anchored proteins to the ER-exit site, or the interaction might lead to recycling of PGAP5 between the ER and the Golgi. Interacts with F2LR1/PAR2. Interacts with KDELR2/ERD2; the interaction is disrupted by KDELR2 ligand. Found in a complex composed at least of SURF4, TMED2 and TMED10. Associates with the presenilin-dependent gamma-secretase complex. Interacts with STX17; the interaction is direct. Interacts with IL-1; the interaction is direct. Interacts with RAB21 (active GTP-bound form); the interaction is indirect and regulates TMED10 abundance and localization at the Golgi.

The protein resides in the endoplasmic reticulum membrane. It localises to the endoplasmic reticulum-Golgi intermediate compartment membrane. It is found in the golgi apparatus membrane. The protein localises to the golgi apparatus. Its subcellular location is the cis-Golgi network membrane. The protein resides in the trans-Golgi network membrane. It localises to the cytoplasmic vesicle. It is found in the secretory vesicle membrane. The protein localises to the cell membrane. Its subcellular location is the melanosome. Its function is as follows. Cargo receptor involved in protein vesicular trafficking and quality control in the endoplasmic reticulum (ER) and Golgi. The p24 protein family is a group of transmembrane proteins that bind coat protein complex I/COPI and coat protein complex II/COPII involved in vesicular trafficking between the membranes. Acts at the lumenal side for incorporation of secretory cargo molecules into transport vesicles and involved in vesicle coat formation at the cytoplasmic side. Mainly functions in the early secretory pathway and cycles between the ER, ER-Golgi intermediate compartment (ERGIC) and Golgi, mediating cargo transport through COPI and COPII-coated vesicles. In COPII vesicle-mediated anterograde transport, involved in the transport of GPI-anchored proteins by acting together with TMED2 as their cargo receptor; the function specifically implies SEC24C and SEC24D of the COPII vesicle coat and lipid raft-like microdomains of the ER. Recognizes GPI anchors structural remodeled in the ER by the GPI inositol-deacylase/PGAP1 and the metallophosphoesterase MPPE1/PGAP5. In COPI vesicle-mediated retrograde transport, involved in the biogenesis of COPI vesicles and vesicle coat recruitment. Involved in trafficking of amyloid beta A4 protein and soluble APP-beta release (independent from the modulation of gamma-secretase activity). Involved in the KDELR2-mediated retrograde transport of the toxin A subunit (CTX-A-K63)together with COPI and the COOH terminus of KDELR2. On Golgi membranes, acts as a primary receptor for ARF1-GDP, a GTP-binding protein involved in COPI-vesicle formation. Increases coatomer-dependent GTPase-activating activity of ARFGAP2 which mediates the hydrolysis of ARF1-bound GTP and therefore modulates protein trafficking from the Golgi apparatus. Involved in the exocytic trafficking of G protein-coupled receptors F2LR1/PAR2 (trypsin and tryspin-like enzyme receptor), OPRM1 (opioid receptor) and P2RY4 (UTD and UDP receptor) from the Golgi to the plasma membrane, thus contributing to receptor resensitization. In addition to its cargo receptor activity, may also act as a protein channel after oligomerization, facilitating the post-translational entry of leaderless cytoplasmic cargo into the ERGIC. Involved in the translocation into ERGIC, the vesicle entry and the secretion of leaderless cargos (lacking the secretion signal sequence), including the mature form of interleukin 1/IL-1 family members, the alpha-crystallin B chain HSPB5, the carbohydrate-binding proteins galectin-1/LGALS1 and galectin-3/LGALS3, the microtubule-associated protein Tau/MAPT, and the annexin A1/ANXA1; the translocation process is dependent on cargo protein unfolding and enhanced by chaperones HSP90AB1 and HSP90B1/GRP9. Could also associates with the presenilin-dependent gamma-secretase complex in order to regulate gamma-cleavages of the amyloid beta A4 protein to yield amyloid-beta 40/Abeta40. The chain is Transmembrane emp24 domain-containing protein 10 from Mus musculus (Mouse).